The primary structure comprises 352 residues: Phenylalanine--tRNA ligase alpha subunit (352 aa).

Position 258 (Glu-258) interacts with Mg(2+).

It belongs to the class-II aminoacyl-tRNA synthetase family. Phe-tRNA synthetase alpha subunit type 1 subfamily. In terms of assembly, tetramer of two alpha and two beta subunits. Mg(2+) serves as cofactor.

The protein localises to the cytoplasm. The catalysed reaction is tRNA(Phe) + L-phenylalanine + ATP = L-phenylalanyl-tRNA(Phe) + AMP + diphosphate + H(+). The polypeptide is Phenylalanine--tRNA ligase alpha subunit (Staphylococcus saprophyticus subsp. saprophyticus (strain ATCC 15305 / DSM 20229 / NCIMB 8711 / NCTC 7292 / S-41)).